The chain runs to 313 residues: Ribosomal RNA small subunit methyltransferase H (313 aa).

S-adenosyl-L-methionine-binding positions include 35-37 (GGH), aspartate 55, phenylalanine 79, aspartate 100, and glutamine 107.

It belongs to the methyltransferase superfamily. RsmH family.

It is found in the cytoplasm. It carries out the reaction cytidine(1402) in 16S rRNA + S-adenosyl-L-methionine = N(4)-methylcytidine(1402) in 16S rRNA + S-adenosyl-L-homocysteine + H(+). Specifically methylates the N4 position of cytidine in position 1402 (C1402) of 16S rRNA. This is Ribosomal RNA small subunit methyltransferase H from Burkholderia orbicola (strain MC0-3).